Consider the following 48-residue polypeptide: Phospholipase A2 superbin d (48 aa).

Ca(2+)-binding residues include Tyr28, Gly30, and Gly32. The cysteines at positions 29 and 45 are disulfide-linked. The active site involves His48.

Ca(2+) is required as a cofactor. As to expression, expressed by the venom gland.

It is found in the secreted. The catalysed reaction is a 1,2-diacyl-sn-glycero-3-phosphocholine + H2O = a 1-acyl-sn-glycero-3-phosphocholine + a fatty acid + H(+). Snake venom phospholipase A2 (PLA2) that inhibits collagen-induced platelet aggregation. In terms of inhibition of platelet aggregation, superbin d is less potent as superbin a, b, and c. PLA2 catalyzes the calcium-dependent hydrolysis of the 2-acyl groups in 3-sn-phosphoglycerides. This chain is Phospholipase A2 superbin d, found in Austrelaps superbus (Lowland copperhead snake).